A 39-amino-acid polypeptide reads, in one-letter code: Small basic protein 1 (39 aa).

The residue at position 1 (glutamine 1) is a Pyrrolidone carboxylic acid. 3 cysteine pairs are disulfide-bonded: cysteine 6–cysteine 32, cysteine 10–cysteine 26, and cysteine 14–cysteine 31.

The protein localises to the secreted. This Anas platyrhynchos (Mallard) protein is Small basic protein 1.